The following is a 155-amino-acid chain: Ribosome maturation factor RimP (155 aa).

The protein belongs to the RimP family.

It localises to the cytoplasm. Functionally, required for maturation of 30S ribosomal subunits. In Lachnoclostridium phytofermentans (strain ATCC 700394 / DSM 18823 / ISDg) (Clostridium phytofermentans), this protein is Ribosome maturation factor RimP.